Consider the following 377-residue polypeptide: Nitric oxide reductase FlRd-NAD(+) reductase (377 aa).

It belongs to the FAD-dependent oxidoreductase family. The cofactor is FAD.

Its subcellular location is the cytoplasm. The catalysed reaction is 2 reduced [nitric oxide reductase rubredoxin domain] + NAD(+) + H(+) = 2 oxidized [nitric oxide reductase rubredoxin domain] + NADH. It functions in the pathway nitrogen metabolism; nitric oxide reduction. Functionally, one of at least two accessory proteins for anaerobic nitric oxide (NO) reductase. Reduces the rubredoxin moiety of NO reductase. The polypeptide is Nitric oxide reductase FlRd-NAD(+) reductase (Shigella flexneri serotype 5b (strain 8401)).